Reading from the N-terminus, the 978-residue chain is Peroxisomal ATPase PEX6 (978 aa).

Arginine 119 carries the omega-N-methylarginine modification. ATP-binding positions include glycine 470–threonine 477 and glycine 742–threonine 749.

It belongs to the AAA ATPase family. Interacts with PEX1; forming the PEX1-PEX6 AAA ATPase complex, which is composed of a heterohexamer formed by a trimer of PEX1-PEX6 dimers. Interacts with PEX26; interaction is direct and promotes recruitment to peroxisomal membranes. Interacts with ZFAND6.

It is found in the cytoplasm. It localises to the cytosol. The protein localises to the peroxisome membrane. The protein resides in the cell projection. Its subcellular location is the cilium. It is found in the photoreceptor outer segment. It catalyses the reaction ATP + H2O = ADP + phosphate + H(+). Functionally, component of the PEX1-PEX6 AAA ATPase complex, a protein dislocase complex that mediates the ATP-dependent extraction of the PEX5 receptor from peroxisomal membranes, an essential step for PEX5 recycling. Specifically recognizes PEX5 monoubiquitinated at 'Cys-11', and pulls it out of the peroxisome lumen through the PEX2-PEX10-PEX12 retrotranslocation channel. Extraction by the PEX1-PEX6 AAA ATPase complex is accompanied by unfolding of the TPR repeats and release of bound cargo from PEX5. The sequence is that of Peroxisomal ATPase PEX6 from Rattus norvegicus (Rat).